Here is a 257-residue protein sequence, read N- to C-terminus: 5'-nucleotidase SurE (257 aa).

A divalent metal cation-binding residues include D11, D12, S42, and N99.

It belongs to the SurE nucleotidase family. A divalent metal cation is required as a cofactor.

Its subcellular location is the cytoplasm. It carries out the reaction a ribonucleoside 5'-phosphate + H2O = a ribonucleoside + phosphate. Functionally, nucleotidase that shows phosphatase activity on nucleoside 5'-monophosphates. This chain is 5'-nucleotidase SurE, found in Flavobacterium psychrophilum (strain ATCC 49511 / DSM 21280 / CIP 103535 / JIP02/86).